An 852-amino-acid polypeptide reads, in one-letter code: Serine/threonine-protein kinase pakB (852 aa).

A disordered region spans residues 1–334; the sequence is MEQSKRVSMM…NVGNKQDEEK (334 aa). At Ser-8 the chain carries Phosphoserine; by autocatalysis. The span at 24–35 shows a compositional bias: pro residues; the sequence is SPPPNRKPPPPN. Residues 44 to 56 are compositionally biased toward low complexity; sequence SSLNSSGSSFVSP. Positions 57-74 are enriched in pro residues; that stretch reads SPSPSPSPQQPVKRPLPS. 2 stretches are compositionally biased toward low complexity: residues 90-117 and 124-163; these read RPQQ…NSNG and FSSS…GSSN. Residues 181-191 are compositionally biased toward pro residues; sequence TPPPPPQPTPS. Positions 201–210 are enriched in polar residues; it reads ASHNNTQHNI. 2 stretches are compositionally biased toward low complexity: residues 246–270 and 293–317; these read SPGS…STPI and SNSN…ATTS. The CRIB domain maps to 356–369; the sequence is VGSPFNVKHNIHVN. Low complexity predominate over residues 419 to 433; that stretch reads AQQEQQALMQKQMQQ. The disordered stretch occupies residues 419–526; that stretch reads AQQEQQALMQ…GILSQQQEQQ (108 aa). Basic residues predominate over residues 470 to 485; the sequence is PQHHHQQQPPQQHHHQ. Low complexity predominate over residues 486 to 514; it reads QQQQQHNNNNNNNNNNNNNNNNQQSAQQQ. Positions 570–823 constitute a Protein kinase domain; the sequence is GEGSTKIGEG…AKVLLNHPFL (254 aa). Residues 576–584 and Lys-599 contribute to the ATP site; that span reads IGEGAAGEV. Residue Asp-691 is the Proton acceptor of the active site.

It belongs to the protein kinase superfamily. STE Ser/Thr protein kinase family. STE20 subfamily. As to quaternary structure, interacts with rac1A, rac1B, rac1C, racA, racB, racC and racF1. It depends on Mg(2+) as a cofactor. Autophosphorylated at Ser-8. This may stimulate interaction with GTP-bound Rac family members which then further stimulates autophosphorylation and kinase activity.

Its subcellular location is the membrane. It localises to the cytoplasm. The protein resides in the cytoskeleton. It carries out the reaction L-seryl-[protein] + ATP = O-phospho-L-seryl-[protein] + ADP + H(+). It catalyses the reaction L-threonyl-[protein] + ATP = O-phospho-L-threonyl-[protein] + ADP + H(+). Its function is as follows. Regulator of the myosin I component of the cytoskeleton: required for regulation of cytokinesis, phagocytosis and pinocytosis. This is Serine/threonine-protein kinase pakB from Dictyostelium discoideum (Social amoeba).